We begin with the raw amino-acid sequence, 601 residues long: Deuterosome assembly protein 1 (601 aa).

3 coiled-coil regions span residues 14–59 (CEAE…NAQT), 86–196 (TQNY…GKKQ), and 226–277 (IEKL…ELQS). The interval 305 to 329 (AQDNRKRVESSYSPSPKEAERKRKE) is disordered. Positions 354–397 (EEGLCSEQERLRSEISELTQELHQKEVTIATVMKKAALLERQLK) form a coiled coil. The residue at position 544 (Ser544) is a Phosphoserine. A coiled-coil region spans residues 555 to 586 (AAQHFLMEEERRAKELEKLLNTHIDELQRHTE).

This sequence belongs to the CEP63 family. As to quaternary structure, interacts with CEP152; the interaction is mutually exclusive with CEP63. Highly enriched in multicilia-abundant tissues (trachea and oviduct).

It localises to the cytoplasm. Key structural component of the deuterosome, a structure that promotes de novo centriole amplification in multiciliated cells. Deuterosome-mediated centriole amplification occurs in terminally differentiated multiciliated cells and can generate more than 100 centrioles. Probably sufficient for the specification and formation of the deuterosome inner core. Interacts with CEP152 and recruits PLK4 to activate centriole biogenesis. This Mus musculus (Mouse) protein is Deuterosome assembly protein 1.